Here is a 159-residue protein sequence, read N- to C-terminus: Large ribosomal subunit protein uL22c (159 aa).

It belongs to the universal ribosomal protein uL22 family. As to quaternary structure, part of the 50S ribosomal subunit.

Its subcellular location is the plastid. It localises to the chloroplast. Functionally, this protein binds specifically to 23S rRNA. In terms of biological role, the globular domain of the protein is located near the polypeptide exit tunnel on the outside of the subunit, while an extended beta-hairpin is found that lines the wall of the exit tunnel in the center of the 70S ribosome. The sequence is that of Large ribosomal subunit protein uL22c (rpl22) from Ipomoea purpurea (Common morning glory).